Consider the following 250-residue polypeptide: MATKQAHKRLTKEYKLMVENPPPYILARPNEDNILEWHYIITGPADTPYKGGQYHGTLTFPSDYPYKPPAIRMITPNGRFKPNTRLCLSMSDYHPDTWNPGWSVSTILNGLLSFMTSDEATTGSITTSDHQKKTLARNSISYNTFQNVRFKLIFPEVVQENVETLEKRKLDEGDAANTGDETEDPFTKAAKEKVISLEEILDPEDRIRAEQALRQSENNSKKDGKEPNDSSSMVYIGIAIFLFLVGLFMK.

Residues 1–232 (MATKQAHKRL…DGKEPNDSSS (232 aa)) are Cytoplasmic-facing. The 163-residue stretch at 5 to 167 (QAHKRLTKEY…VQENVETLEK (163 aa)) folds into the UBC core domain. Cys87 acts as the Glycyl thioester intermediate in catalysis. Residue Ser139 is modified to Phosphoserine. At Thr178 the chain carries Phosphothreonine. The tract at residues 209–229 (AEQALRQSENNSKKDGKEPND) is disordered. Residues 219–228 (NSKKDGKEPN) are compositionally biased toward basic and acidic residues. A helical transmembrane segment spans residues 233 to 249 (MVYIGIAIFLFLVGLFM).

It belongs to the ubiquitin-conjugating enzyme family.

The protein localises to the endoplasmic reticulum membrane. The enzyme catalyses S-ubiquitinyl-[E1 ubiquitin-activating enzyme]-L-cysteine + [E2 ubiquitin-conjugating enzyme]-L-cysteine = [E1 ubiquitin-activating enzyme]-L-cysteine + S-ubiquitinyl-[E2 ubiquitin-conjugating enzyme]-L-cysteine.. It participates in protein modification; protein ubiquitination. Catalyzes the covalent attachment of ubiquitin to other proteins. Functions in degradation of misfolded or regulated proteins localized in the endoplasmic reticulum (ER) lumen or membrane via the ubiquitin-proteasome system. Cognate E2 conjugating enzyme for the DOA10 ubiquitin ligase complex, which is part of the ERAD-C pathway responsible for the rapid degradation of membrane proteins with misfolded cytoplasmic domains. The sequence is that of Ubiquitin-conjugating enzyme E2 6 (UBC6) from Saccharomyces cerevisiae (strain ATCC 204508 / S288c) (Baker's yeast).